We begin with the raw amino-acid sequence, 248 residues long: Thioredoxin-like protein AAED1, chloroplastic (248 aa).

Residues 1–52 (MAIALSSSSTITSITLQPKLKTIHGLGTVLPGYSVKSHFRSVSLRRSAVVVS) constitute a chloroplast transit peptide. An N-acetylalanine modification is found at Ala-53.

This sequence belongs to the peroxiredoxin-like PRXL2 family. PRXL2C subfamily.

It is found in the plastid. The protein localises to the chloroplast. The chain is Thioredoxin-like protein AAED1, chloroplastic from Arabidopsis thaliana (Mouse-ear cress).